The following is a 366-amino-acid chain: Ferredoxin--NADP reductase (366 aa).

FAD-binding residues include Asp-51, Gln-59, Tyr-64, Val-104, Phe-139, Asp-308, and Thr-349.

It belongs to the ferredoxin--NADP reductase type 2 family. Homodimer. Requires FAD as cofactor.

It catalyses the reaction 2 reduced [2Fe-2S]-[ferredoxin] + NADP(+) + H(+) = 2 oxidized [2Fe-2S]-[ferredoxin] + NADPH. The sequence is that of Ferredoxin--NADP reductase from Polaromonas sp. (strain JS666 / ATCC BAA-500).